Consider the following 220-residue polypeptide: uncharacterized protein (220 aa).

This is an uncharacterized protein from Archaeoglobus fulgidus (strain ATCC 49558 / DSM 4304 / JCM 9628 / NBRC 100126 / VC-16).